The following is a 278-amino-acid chain: Short-chain dehydrogenase RED2 (278 aa).

Ile15, Asp70, Arg132, Tyr178, Lys182, Val211, and Thr213 together coordinate NADP(+). Residue Tyr178 is the Proton donor of the active site. The active-site Lowers pKa of active site Tyr is Lys182.

This sequence belongs to the short-chain dehydrogenases/reductases (SDR) family.

The protein operates within polyketide biosynthesis. In terms of biological role, short-chain dehydrogenase; part of the gene cluster that mediates the biosynthesis of pyriculol and pyriculariol, two heptaketides that induce lesion formation upon application on rice leaves but are dispensable for pathogenicity. The highly reducing polyketide synthase synthesizes the heptaketide backbone of pyriculol and pyriculariol. Pyriculol and pyriculariol contain several hydroxyl moieties and double bonds, so it can be assumed that several reduction steps occur during biosynthesis. These reactions could be executed by PKS19 itself or partly by the tailoring enzymes OXR1, OXR2, RED1, RED2 or RED3, identified within the cluster. The FAD-linked oxidoreductase OXR1 is the only tailoring enzyme for which the function has been determined yet, and is involved in the oxidation of dihydropyriculol and dihydropyriculariol into pyriculol and pyriculariol, respectively. This chain is Short-chain dehydrogenase RED2, found in Pyricularia oryzae (strain 70-15 / ATCC MYA-4617 / FGSC 8958) (Rice blast fungus).